Consider the following 412-residue polypeptide: NAD-dependent dihydropyrimidine dehydrogenase subunit PreT (412 aa).

E286 contacts NAD(+).

It belongs to the NADH dehydrogenase family. Heterotetramer of 2 PreA and 2 PreT subunits.

The enzyme catalyses 5,6-dihydrouracil + NAD(+) = uracil + NADH + H(+). The catalysed reaction is 5,6-dihydrothymine + NAD(+) = thymine + NADH + H(+). Involved in pyrimidine base degradation. Catalyzes physiologically the reduction of uracil to 5,6-dihydrouracil (DHU) by using NADH as a specific cosubstrate. It also catalyzes the reverse reaction and the reduction of thymine to 5,6-dihydrothymine (DHT). This Escherichia coli (strain K12) protein is NAD-dependent dihydropyrimidine dehydrogenase subunit PreT (preT).